The following is a 127-amino-acid chain: Gamma-synuclein (127 aa).

A run of 2 repeats spans residues 20–30 and 31–41. Residues 20–67 are 4 X 11 AA tandem repeats of [EGSA]-K-T-K-[EQ]-[GQ]-V-X(4); it reads EKTKQGVTEAAEKTKEGVMYVGAKTKEGVVQSVTSVAEKTKEQANAVS. The 3; approximate repeat unit spans residues 42-56; the sequence is AKTKEGVVQSVTSVA. The stretch at 57-67 is repeat 4; the sequence is EKTKEQANAVS. 3 positions are modified to phosphoserine: S67, S72, and S124. Residues 99–127 are disordered; sequence ALKQPVPSQEDEAAKAEEQVAEETKSGGD. Positions 110-127 are enriched in basic and acidic residues; it reads EAAKAEEQVAEETKSGGD.

Belongs to the synuclein family. May be a centrosome-associated protein. Interacts with MYOC; affects its secretion and its aggregation. In terms of processing, phosphorylated by BARK1 and GRK5. In terms of tissue distribution, predominantly expressed in retina (predominantly in outer nuclear layer, also in inner segment of photoreceptor cells, some individual cells located in the inner nuclear layer, inner plexiform layer and in nerve fiber layer). Also found in brain and heart.

Its subcellular location is the cytoplasm. The protein resides in the perinuclear region. It localises to the cytoskeleton. The protein localises to the microtubule organizing center. It is found in the centrosome. Its subcellular location is the spindle. Its function is as follows. Plays a role in neurofilament network integrity. May be involved in modulating axonal architecture during development and in the adult. In vitro, increases the susceptibility of neurofilament-H to calcium-dependent proteases. May also function in modulating the keratin network in skin. Activates the MAPK and Elk-1 signal transduction pathway. The sequence is that of Gamma-synuclein (SNCG) from Bos taurus (Bovine).